The sequence spans 223 residues: Ribonuclease DdI (223 aa).

Residues 1–25 (MRLIAALLSVLLIASTAQSTVTIYE) form the signal peptide. The cysteines at positions 46 and 51 are disulfide-linked. Residues His-63, Glu-113, and His-117 contribute to the active site. An intrachain disulfide couples Cys-78 to Cys-120. An N-linked (GlcNAc...) asparagine glycan is attached at Asn-144. Disulfide bonds link Cys-183–Cys-213 and Cys-194–Cys-205.

The protein belongs to the RNase T2 family.

The protein localises to the lysosome. It carries out the reaction a ribonucleotidyl-ribonucleotide-RNA + H2O = a 3'-end 3'-phospho-ribonucleotide-RNA + a 5'-end dephospho-ribonucleoside-RNA + H(+). Inhibited by Cu(2+) and Zn(2+). Its function is as follows. Releases mononucleotides from RNA in the order of 3'-GMP &gt; 3'-UMP &gt; 3'-AMP &gt; 3'-CMP. The sequence is that of Ribonuclease DdI (ddiA) from Dictyostelium discoideum (Social amoeba).